The primary structure comprises 121 residues: uncharacterized protein (121 aa).

Residues 6-26 (ITTASILLVVIVAFCAAAPMI) form a helical membrane-spanning segment.

It is found in the membrane. This is an uncharacterized protein from Caenorhabditis elegans.